The following is a 432-amino-acid chain: Glutamate-1-semialdehyde 2,1-aminomutase (432 aa).

Residue Lys-270 is modified to N6-(pyridoxal phosphate)lysine.

It belongs to the class-III pyridoxal-phosphate-dependent aminotransferase family. HemL subfamily. In terms of assembly, homodimer. It depends on pyridoxal 5'-phosphate as a cofactor.

Its subcellular location is the cytoplasm. The catalysed reaction is (S)-4-amino-5-oxopentanoate = 5-aminolevulinate. It functions in the pathway porphyrin-containing compound metabolism; protoporphyrin-IX biosynthesis; 5-aminolevulinate from L-glutamyl-tRNA(Glu): step 2/2. The chain is Glutamate-1-semialdehyde 2,1-aminomutase from Acinetobacter baumannii (strain ATCC 17978 / DSM 105126 / CIP 53.77 / LMG 1025 / NCDC KC755 / 5377).